Reading from the N-terminus, the 140-residue chain is Ribonuclease P protein component (140 aa).

The tract at residues 115–140 (RCKPGAPKPPPFKKRPNKSVKSNKQT) is disordered.

Belongs to the RnpA family. As to quaternary structure, consists of a catalytic RNA component (M1 or rnpB) and a protein subunit.

The enzyme catalyses Endonucleolytic cleavage of RNA, removing 5'-extranucleotides from tRNA precursor.. In terms of biological role, RNaseP catalyzes the removal of the 5'-leader sequence from pre-tRNA to produce the mature 5'-terminus. It can also cleave other RNA substrates such as 4.5S RNA. The protein component plays an auxiliary but essential role in vivo by binding to the 5'-leader sequence and broadening the substrate specificity of the ribozyme. The polypeptide is Ribonuclease P protein component (Pseudoalteromonas translucida (strain TAC 125)).